Reading from the N-terminus, the 447-residue chain is Argininosuccinate synthase (447 aa).

Residues 17–25 (AFSGGLDTS) and alanine 43 contribute to the ATP site. Residue tyrosine 99 participates in L-citrulline binding. Residues glycine 129 and threonine 131 each coordinate ATP. L-aspartate-binding residues include threonine 131, asparagine 135, and aspartate 136. Asparagine 135 lines the L-citrulline pocket. Residue aspartate 136 participates in ATP binding. Arginine 139 and serine 192 together coordinate L-citrulline. Aspartate 194 contributes to the ATP binding site. Residues threonine 201, glutamate 203, and glutamate 280 each contribute to the L-citrulline site.

It belongs to the argininosuccinate synthase family. Type 2 subfamily. Homotetramer.

It localises to the cytoplasm. It catalyses the reaction L-citrulline + L-aspartate + ATP = 2-(N(omega)-L-arginino)succinate + AMP + diphosphate + H(+). It functions in the pathway amino-acid biosynthesis; L-arginine biosynthesis; L-arginine from L-ornithine and carbamoyl phosphate: step 2/3. This chain is Argininosuccinate synthase, found in Citrobacter koseri (strain ATCC BAA-895 / CDC 4225-83 / SGSC4696).